The chain runs to 441 residues: MFS-type transporter (441 aa).

The tract at residues 1–47 (MPPQQEQDTDSDAIRSYNEESKSETPGCIPDAMLSSDETSNDVASDI) is disordered. The next 10 membrane-spanning stretches (helical) occupy residues 61–81 (TLCGHFLFMNTWGFINSFGIF), 95–115 (DISWIGSIQVFLSFFVGAFVG), 125–145 (LVLSCGTILVLIGIFTASLST), 150–170 (LILSQGICCGLGNGFLVTPAV), 183–203 (LAIGISTCGSVTGALVFNSMA), 212–232 (FGWTMRAIGFVQAATLLFVVV), 259–279 (FFTIGMFFNFWAVFFGYYYIA), 289–309 (TLTYTQSLNLLLILNGVGVFG), 323–343 (LELLIPTCLVAAVATFSWIAV), and 351–371 (VWTVFYGIIGGSILSLFPAGI). N-linked (GlcNAc...) asparagine glycosylation occurs at N388. Transmembrane regions (helical) follow at residues 389–409 (FTVISFATLTGNPIAGAIITA) and 415–435 (YGAQAFMGSSFIVGTAFIVAA).

Belongs to the major facilitator superfamily. Monocarboxylate porter (TC 2.A.1.13) family.

Its subcellular location is the membrane. Functionally, MFS-type transporter; part of the gene cluster that mediates the biosynthesis of butenolide, a mycotoxin that shows antibiotic activity but does not seem to play a major role in the spread of head blight in wheat. The protein is MFS-type transporter of Gibberella zeae (strain ATCC MYA-4620 / CBS 123657 / FGSC 9075 / NRRL 31084 / PH-1) (Wheat head blight fungus).